Reading from the N-terminus, the 388-residue chain is Carbamoyl phosphate synthase small chain (388 aa).

Residues 1 to 192 are CPSase; sequence MPLSDAMPAL…FNPDGTVKNG (192 aa). L-glutamine contacts are provided by Ser51, Gly244, and Gly246. The region spanning 196–382 is the Glutamine amidotransferase type-1 domain; the sequence is TVVALDFGVK…VHQMRTTKQA (187 aa). Catalysis depends on Cys272, which acts as the Nucleophile. Residues Met273, Gln276, Asn312, and Phe315 each contribute to the L-glutamine site. Residues His355 and Glu357 contribute to the active site.

This sequence belongs to the CarA family. Composed of two chains; the small (or glutamine) chain promotes the hydrolysis of glutamine to ammonia, which is used by the large (or ammonia) chain to synthesize carbamoyl phosphate. Tetramer of heterodimers (alpha,beta)4.

It carries out the reaction hydrogencarbonate + L-glutamine + 2 ATP + H2O = carbamoyl phosphate + L-glutamate + 2 ADP + phosphate + 2 H(+). The catalysed reaction is L-glutamine + H2O = L-glutamate + NH4(+). It functions in the pathway amino-acid biosynthesis; L-arginine biosynthesis; carbamoyl phosphate from bicarbonate: step 1/1. It participates in pyrimidine metabolism; UMP biosynthesis via de novo pathway; (S)-dihydroorotate from bicarbonate: step 1/3. In terms of biological role, small subunit of the glutamine-dependent carbamoyl phosphate synthetase (CPSase). CPSase catalyzes the formation of carbamoyl phosphate from the ammonia moiety of glutamine, carbonate, and phosphate donated by ATP, constituting the first step of 2 biosynthetic pathways, one leading to arginine and/or urea and the other to pyrimidine nucleotides. The small subunit (glutamine amidotransferase) binds and cleaves glutamine to supply the large subunit with the substrate ammonia. The protein is Carbamoyl phosphate synthase small chain of Nostoc sp. (strain PCC 7120 / SAG 25.82 / UTEX 2576).